An 825-amino-acid chain; its full sequence is Exocyst complex component SEC10a (825 aa).

Positions 244–266 form a coiled coil; it reads RGLEVAVANLQDYCNELENRLLS.

Belongs to the SEC10 family. The exocyst complex is composed of SEC3, SEC5, SEC6, SEC8, SEC10, EXO70A1 and EXO84B. Interacts with EXO84B. Binds to EXO70E2. Binds directly to B1L. Expressed in seedlings, roots, leaves and flowers.

It localises to the cytoplasm. It is found in the cytosol. Its subcellular location is the secreted. The protein localises to the extracellular exosome. Functionally, component of the exocyst complex involved in the docking of exocytic vesicles with fusion sites on the plasma membrane during regulated or polarized secretion. Involved in polarized cell growth and organ morphogenesis. During cytokinesis, involved in cell plate initiation, cell plate maturation and formation of new primary cell wall. The protein is Exocyst complex component SEC10a of Arabidopsis thaliana (Mouse-ear cress).